The sequence spans 134 residues: MIICNDSYPSVLDKIADMLTKAEVELVFVSNEEMREINRDKRGMDKTTDVLSFPLTYVPHFPIGSIVINTDLASSKALELGHSTDDEIALLFTHGLLHILGFDHENDDGEMRRKEISIMEHMGLPKSLIVRNGC.

Residues His-94, His-98, and His-104 each contribute to the Zn(2+) site.

The protein belongs to the endoribonuclease YbeY family. Zn(2+) is required as a cofactor.

The protein resides in the cytoplasm. Functionally, single strand-specific metallo-endoribonuclease involved in late-stage 70S ribosome quality control and in maturation of the 3' terminus of the 16S rRNA. The protein is Endoribonuclease YbeY of Campylobacter fetus subsp. fetus (strain 82-40).